Here is a 171-residue protein sequence, read N- to C-terminus: Co-chaperone protein HscB homolog (171 aa).

The J domain occupies 2 to 74; it reads NHFELFGLPS…ISRAEYILAE (73 aa).

This sequence belongs to the HscB family. In terms of assembly, interacts with HscA and stimulates its ATPase activity.

Its function is as follows. Co-chaperone involved in the maturation of iron-sulfur cluster-containing proteins. Seems to help targeting proteins to be folded toward HscA. This is Co-chaperone protein HscB homolog from Vibrio parahaemolyticus serotype O3:K6 (strain RIMD 2210633).